Consider the following 416-residue polypeptide: Serine hydroxymethyltransferase (416 aa).

Residues Leu-121 and 125 to 127 (GHL) contribute to the (6S)-5,6,7,8-tetrahydrofolate site. Lys-230 carries the post-translational modification N6-(pyridoxal phosphate)lysine.

It belongs to the SHMT family. Homodimer. The cofactor is pyridoxal 5'-phosphate.

The protein resides in the cytoplasm. It carries out the reaction (6R)-5,10-methylene-5,6,7,8-tetrahydrofolate + glycine + H2O = (6S)-5,6,7,8-tetrahydrofolate + L-serine. The protein operates within one-carbon metabolism; tetrahydrofolate interconversion. It functions in the pathway amino-acid biosynthesis; glycine biosynthesis; glycine from L-serine: step 1/1. Its function is as follows. Catalyzes the reversible interconversion of serine and glycine with tetrahydrofolate (THF) serving as the one-carbon carrier. This reaction serves as the major source of one-carbon groups required for the biosynthesis of purines, thymidylate, methionine, and other important biomolecules. Also exhibits THF-independent aldolase activity toward beta-hydroxyamino acids, producing glycine and aldehydes, via a retro-aldol mechanism. The sequence is that of Serine hydroxymethyltransferase from Nitrosospira multiformis (strain ATCC 25196 / NCIMB 11849 / C 71).